The sequence spans 954 residues: Glycine dehydrogenase (decarboxylating) (954 aa).

Position 704 is an N6-(pyridoxal phosphate)lysine (K704).

It belongs to the GcvP family. In terms of assembly, the glycine cleavage system is composed of four proteins: P, T, L and H. The cofactor is pyridoxal 5'-phosphate.

The catalysed reaction is N(6)-[(R)-lipoyl]-L-lysyl-[glycine-cleavage complex H protein] + glycine + H(+) = N(6)-[(R)-S(8)-aminomethyldihydrolipoyl]-L-lysyl-[glycine-cleavage complex H protein] + CO2. In terms of biological role, the glycine cleavage system catalyzes the degradation of glycine. The P protein binds the alpha-amino group of glycine through its pyridoxal phosphate cofactor; CO(2) is released and the remaining methylamine moiety is then transferred to the lipoamide cofactor of the H protein. The polypeptide is Glycine dehydrogenase (decarboxylating) (Allorhizobium ampelinum (strain ATCC BAA-846 / DSM 112012 / S4) (Agrobacterium vitis (strain S4))).